A 1220-amino-acid polypeptide reads, in one-letter code: von Willebrand factor A domain-containing protein 5B1 (1220 aa).

Residues M1 to S18 form the signal peptide. The VIT domain occupies D19–S149. Residue N140 is glycosylated (N-linked (GlcNAc...) asparagine). Positions E361–L529 constitute a VWFA domain. N-linked (GlcNAc...) asparagine glycosylation occurs at N650. The disordered stretch occupies residues N715–P807. A compositionally biased stretch (basic and acidic residues) spans V757–H774. Residues R796–P807 are compositionally biased toward low complexity. Y881 carries the phosphotyrosine modification. Disordered regions lie at residues R937–Q962 and E976–L995. N1017 is a glycosylation site (N-linked (GlcNAc...) asparagine). Over residues T1093–P1111 the composition is skewed to polar residues. Residues T1093–P1115 are disordered.

It localises to the secreted. This Homo sapiens (Human) protein is von Willebrand factor A domain-containing protein 5B1 (VWA5B1).